Here is a 200-residue protein sequence, read N- to C-terminus: Small ribosomal subunit protein uS4 (200 aa).

The disordered stretch occupies residues 22–42 (TGKELEKRPYAPGPHGPNQRK). The S4 RNA-binding domain maps to 92 to 152 (ARLDNLVYRM…EKSNSLVVVK (61 aa)).

The protein belongs to the universal ribosomal protein uS4 family. As to quaternary structure, part of the 30S ribosomal subunit. Contacts protein S5. The interaction surface between S4 and S5 is involved in control of translational fidelity.

One of the primary rRNA binding proteins, it binds directly to 16S rRNA where it nucleates assembly of the body of the 30S subunit. In terms of biological role, with S5 and S12 plays an important role in translational accuracy. The sequence is that of Small ribosomal subunit protein uS4 from Bacillus cereus (strain B4264).